Consider the following 170-residue polypeptide: ATP synthase subunit b, chloroplastic (170 aa).

Residues 15–35 traverse the membrane as a helical segment; the sequence is ILETNVINLAVVVGVVVFFVG.

This sequence belongs to the ATPase B chain family. F-type ATPases have 2 components, F(1) - the catalytic core - and F(0) - the membrane proton channel. F(1) has five subunits: alpha(3), beta(3), gamma(1), delta(1), epsilon(1). F(0) has four main subunits: a(1), b(1), b'(1) and c(10-14). The alpha and beta chains form an alternating ring which encloses part of the gamma chain. F(1) is attached to F(0) by a central stalk formed by the gamma and epsilon chains, while a peripheral stalk is formed by the delta, b and b' chains.

The protein localises to the plastid. Its subcellular location is the chloroplast thylakoid membrane. Functionally, f(1)F(0) ATP synthase produces ATP from ADP in the presence of a proton or sodium gradient. F-type ATPases consist of two structural domains, F(1) containing the extramembraneous catalytic core and F(0) containing the membrane proton channel, linked together by a central stalk and a peripheral stalk. During catalysis, ATP synthesis in the catalytic domain of F(1) is coupled via a rotary mechanism of the central stalk subunits to proton translocation. In terms of biological role, component of the F(0) channel, it forms part of the peripheral stalk, linking F(1) to F(0). The polypeptide is ATP synthase subunit b, chloroplastic (Stigeoclonium helveticum (Green alga)).